We begin with the raw amino-acid sequence, 275 residues long: uncharacterized protein (275 aa).

This is an uncharacterized protein from Acanthamoeba polyphaga mimivirus (APMV).